Reading from the N-terminus, the 498-residue chain is Flagellin (498 aa).

It belongs to the bacterial flagellin family.

Its subcellular location is the secreted. The protein resides in the bacterial flagellum. Flagellin is the subunit protein which polymerizes to form the filaments of bacterial flagella. The chain is Flagellin (fliC) from Escherichia coli (strain K12).